The chain runs to 550 residues: Acyl-CoA-dependent acyltransferase MAC2 (550 aa).

This sequence belongs to the trichothecene O-acetyltransferase family.

It functions in the pathway secondary metabolite biosynthesis. Acyl-CoA-dependent acyltransferase; part of the gene cluster that mediates the biosynthesis of mannosylerythritol lipids (MELs), surface-active substances that enhance the availability of water-insoluble substrates. Depending on the number of acetyl groups, mannosylerythritol lipids can be differentiated into MEL A (fully acetylated), MEL B and MEL C (monoacetylated at R-6 and R-4, respectively), and the fully deacetylated MEL D. The first step in the pathway is the generation of mannosylerythritol by the glycosyltransferase EMT1 which catalyzes the transfer of GDP-mannose to the C-4 atom of meso-erythritol. This reaction has to be stereospecific, since only mannosyl-D-erythritol is generated. The produced disaccharide is subsequently acylated with fatty acids of various lengths by the acyltransferases MAC1 and MAC2 at positions C-2 and C-3, repectively. The existence of MEL derivatives which carry an acetyl group at C-2 implies that at least MAC1 also accepts acetyl-CoA as a donor. The final step of MEL biosynthesis is the acetylation of the fully acylated mannosylerythritol lipids catalyzed by the acetyl-CoA-dependent acetyltransferase MAT1. MAT1 displays a relaxed regioselectivity and is able to transfer acetylgroups to both positions C-4 and C-6 of the mannosyl moiety. In Pseudozyma antarctica (strain T-34) (Yeast), this protein is Acyl-CoA-dependent acyltransferase MAC2.